Here is a 443-residue protein sequence, read N- to C-terminus: Phosphatidate cytidylyltransferase 2 (443 aa).

Positions 1–38 (MTELRQRAVREDAPPEDKESESEAKLDGETASDSESRA) are enriched in basic and acidic residues. The interval 1 to 51 (MTELRQRAVREDAPPEDKESESEAKLDGETASDSESRAETAPPPTSIDDTP) is disordered. Position 20 is a phosphoserine (serine 20). Threonine 30 bears the Phosphothreonine mark. A phosphoserine mark is found at serine 32, serine 34, and serine 36. Residue threonine 50 is modified to Phosphothreonine. The next 6 membrane-spanning stretches (helical) occupy residues 78-98 (MIAF…MIVM), 129-149 (WYFL…DYFF), 165-185 (HRFI…LSLV), 212-232 (LVIH…SCVI), 261-281 (GFIG…YVMS), and 338-358 (SALS…ASGF).

The protein belongs to the CDS family. Homodimer.

It localises to the endoplasmic reticulum membrane. It catalyses the reaction a 1,2-diacyl-sn-glycero-3-phosphate + CTP + H(+) = a CDP-1,2-diacyl-sn-glycerol + diphosphate. The catalysed reaction is 1-octadecanoyl-2-(5Z,8Z,11Z,14Z-eicosatetraenoyl)-sn-glycero-3-phosphate + CTP + H(+) = 1-octadecanoyl-2-(5Z,8Z,11Z,14Z-eicosatetraenoyl)-sn-glycero-3-cytidine-5'-diphosphate + diphosphate. The enzyme catalyses 1-octadecanoyl-2-(9Z,12Z-octadecadienoyl)-sn-glycero-3-phosphate + CTP + H(+) = 1-octadecanoyl-2-(9Z,12Z-octadecadienoyl)-sn-glycero-3-cytidine-5'-diphosphate + diphosphate. It carries out the reaction 1-hexadecanoyl-2-(5Z,8Z,11Z,14Z-eicosatetraenoyl)-sn-glycero-3-phosphate + CTP + H(+) = 1-hexadecanoyl-2-(5Z,8Z,11Z,14Z-eicosatetraenoyl)-sn-glycero-3-cytidine-5'-diphosphate + diphosphate. It catalyses the reaction 1,2-di-(5Z,8Z,11Z,14Z)-eicosatetraenoyl-sn-glycero-3-phosphate + CTP + H(+) = 1,2-di-(5Z,8Z,11Z,14Z-eicosatetraenoyl)-sn-glycero-3-cytidine-5'-diphosphate + diphosphate. The catalysed reaction is 1-octadecanoyl-2-(9Z-octadecenoyl)-sn-glycero-3-phosphate + CTP + H(+) = 1-octadecanoyl-2-(9Z-octadecenoyl)-sn-glycero-3-cytidine-5'-diphosphate + diphosphate. The enzyme catalyses 1-octadecanoyl-2-(4Z,7Z,10Z,13Z,16Z,19Z-docosahexaenoyl)-sn-glycero-3-phosphate + CTP + H(+) = 1-octadecanoyl-2-(4Z,7Z,10Z,13Z,16Z,19Z-docosahexaenoyl)-sn-glycero-3-cytidine-5'-diphosphate + diphosphate. It carries out the reaction 1,2-di-(9Z,12Z-octadecadienoyl)-sn-glycero-3-phosphate + CTP + H(+) = 1,2-di-(9Z,12Z-octadecadienoyl)-sn-glycero-3-cytidine-5'-diphosphate + diphosphate. It catalyses the reaction 1,2-di-(9Z-octadecenoyl)-sn-glycero-3-phosphate + CTP + H(+) = 1,2-di-(9Z-octadecenoyl)-sn-glycero-3-cytidine-5'-diphosphate + diphosphate. It functions in the pathway phospholipid metabolism; CDP-diacylglycerol biosynthesis; CDP-diacylglycerol from sn-glycerol 3-phosphate: step 3/3. Its function is as follows. Catalyzes the conversion of phosphatidic acid (PA) to CDP-diacylglycerol (CDP-DAG), an essential intermediate in the synthesis of phosphatidylglycerol, cardiolipin and phosphatidylinositol. Exhibits specificity for the nature of the acyl chains at the sn-1 and sn-2 positions in the substrate, PA and the preferred acyl chain composition is 1-stearoyl-2-arachidonoyl-sn-phosphatidic acid. Plays an important role in regulating the growth and maturation of lipid droplets which are storage organelles at the center of lipid and energy homeostasis. This chain is Phosphatidate cytidylyltransferase 2, found in Rattus norvegicus (Rat).